Here is a 547-residue protein sequence, read N- to C-terminus: uncharacterized protein (547 aa).

The Cytoplasmic segment spans residues 1-19; the sequence is MVRLNHAASYFMPIFCSTR. The helical transmembrane segment at 20 to 40 threads the bilayer; the sequence is PHIVILSALFSISLFSLFYAS. Over 41 to 64 the chain is Vacuolar; the sequence is SELLLHQYDDPLMFKPNSQDYFRT. Residues 65–85 traverse the membrane as a helical segment; sequence FLLGLFSPFLYYFLKTFLFNI. Residues 86–89 lie on the Cytoplasmic side of the membrane; sequence NQRF. The chain crosses the membrane as a helical span at residues 90–110; it reads LILNLIVDFPINDVFMLLILI. The Vacuolar portion of the chain corresponds to 111–139; the sequence is GLAYPQVQDHEGGTIKHKECSWHIIPRQA. Residues 140–160 traverse the membrane as a helical segment; it reads YIFGISWALGEFTICIIGNLF. Over 161-340 the chain is Cytoplasmic; sequence NYQEIADPNI…RFIAFSTAYQ (180 aa). Phosphoserine is present on Ser-225. Residues 237–271 form a disordered region; it reads PIKPLRSSSSTYGSIRQQPHENKKQLHVPDNSQDD. The span at 242-253 shows a compositional bias: polar residues; it reads RSSSSTYGSIRQ. A helical transmembrane segment spans residues 341 to 361; it reads LVTGLLLMILVVGSNIMLTIG. Residues 362 to 394 lie on the Vacuolar side of the membrane; that stretch reads ESLILSMYFVYVRGHEGLFTPVVNYFGSRTISN. The chain crosses the membrane as a helical span at residues 395 to 415; it reads FILCVIIPFISLNFLINTSIY. At 416–523 the chain is on the cytoplasmic side; it reads LRRELDDWFN…NWRALARNDS (108 aa). Residues 524-544 form a helical membrane-spanning segment; the sequence is FVLGVMVSWSLLVFVTGILST. Topologically, residues 545 to 547 are vacuolar; it reads VYI.

It localises to the vacuole membrane. This is an uncharacterized protein from Saccharomyces cerevisiae (strain ATCC 204508 / S288c) (Baker's yeast).